Reading from the N-terminus, the 218-residue chain is Response regulator UvrY (218 aa).

Positions 3–119 constitute a Response regulatory domain; it reads NVLLVDDHEL…EVVSAIRSVY (117 aa). D54 is subject to 4-aspartylphosphate. One can recognise an HTH luxR-type domain in the interval 143–208; it reads TESPFASLSE…ELTHLAIRHG (66 aa). The H-T-H motif DNA-binding region spans 167 to 186; it reads VNEISEQLNLSPKTVNSYRY.

Phosphorylated and activated by BarA.

Its subcellular location is the cytoplasm. Member of the two-component regulatory system UvrY/BarA involved in the regulation of carbon metabolism via the CsrA/CsrB regulatory system. UvrY activates the transcription of the untranslated csrB RNA and of barA, in an autoregulatory loop. Mediates the effects of CsrA on csrB RNA by BarA-dependent and BarA-independent mechanisms. The chain is Response regulator UvrY (uvrY) from Escherichia coli O157:H7.